A 588-amino-acid polypeptide reads, in one-letter code: Aspartate--tRNA(Asp/Asn) ligase (588 aa).

Glu-172 lines the L-aspartate pocket. The tract at residues Gln-196–Lys-199 is aspartate. Arg-218 provides a ligand contact to L-aspartate. Residues Arg-218–Glu-220 and Gln-227 contribute to the ATP site. An L-aspartate-binding site is contributed by His-450. An ATP-binding site is contributed by Glu-484. Arg-491 contacts L-aspartate. Residue Gly-536 to Arg-539 participates in ATP binding.

This sequence belongs to the class-II aminoacyl-tRNA synthetase family. Type 1 subfamily. Homodimer.

It is found in the cytoplasm. The enzyme catalyses tRNA(Asx) + L-aspartate + ATP = L-aspartyl-tRNA(Asx) + AMP + diphosphate. Aspartyl-tRNA synthetase with relaxed tRNA specificity since it is able to aspartylate not only its cognate tRNA(Asp) but also tRNA(Asn). Reaction proceeds in two steps: L-aspartate is first activated by ATP to form Asp-AMP and then transferred to the acceptor end of tRNA(Asp/Asn). The sequence is that of Aspartate--tRNA(Asp/Asn) ligase from Nitrosospira multiformis (strain ATCC 25196 / NCIMB 11849 / C 71).